The following is a 122-amino-acid chain: uncharacterized protein (122 aa).

2 helical membrane-spanning segments follow: residues 14–34 (WLWI…FNNV) and 83–103 (IIGV…YFII).

Its subcellular location is the cell membrane. This is an uncharacterized protein from Ureaplasma parvum serovar 3 (strain ATCC 700970).